The primary structure comprises 144 residues: Mediator of RNA polymerase II transcription subunit 21 (144 aa).

The protein belongs to the Mediator complex subunit 21 family. As to quaternary structure, interacts with PPARG. Component of the Mediator complex, which is composed of MED1, MED4, MED6, MED7, MED8, MED9, MED10, MED11, MED12, MED13, MED13L, MED14, MED15, MED16, MED17, MED18, MED19, MED20, MED21, MED22, MED23, MED24, MED25, MED26, MED27, MED29, MED30, MED31, CCNC, CDK8 and CDC2L6/CDK11. The MED12, MED13, CCNC and CDK8 subunits form a distinct module termed the CDK8 module. Mediator containing the CDK8 module is less active than Mediator lacking this module in supporting transcriptional activation. Individual preparations of the Mediator complex lacking one or more distinct subunits have been variously termed ARC, CRSP, DRIP, PC2, SMCC and TRAP. Interacts with THRA in a ligand-dependent fashion.

It is found in the nucleus. Component of the Mediator complex, a coactivator involved in the regulated transcription of nearly all RNA polymerase II-dependent genes. Mediator functions as a bridge to convey information from gene-specific regulatory proteins to the basal RNA polymerase II transcription machinery. Mediator is recruited to promoters by direct interactions with regulatory proteins and serves as a scaffold for the assembly of a functional preinitiation complex with RNA polymerase II and the general transcription factors. The protein is Mediator of RNA polymerase II transcription subunit 21 (MED21) of Homo sapiens (Human).